Reading from the N-terminus, the 542-residue chain is Calcium/calmodulin-dependent protein kinase type II subunit beta (542 aa).

Residues 14–272 form the Protein kinase domain; it reads YQLYEDIGKG…AHEALKHPWV (259 aa). Tyr-17 carries the post-translational modification Phosphotyrosine. ATP is bound by residues 20–28 and Lys-43; that span reads IGKGAFSVV. The active-site Proton acceptor is the Asp-136. Residues 283–292 are autoinhibitory domain; the sequence is HRQETVECLK. Thr-287 is modified (phosphothreonine; by autocatalysis). Residues 291 to 301 form a calmodulin-binding region; that stretch reads LKKFNARRKLK. Thr-306 and Thr-307 each carry phosphothreonine; by autocatalysis. Positions 349–376 are disordered; that stretch reads ADGVKPQTNSTKNSSAITSPKGSLPPAA. A compositionally biased stretch (polar residues) spans 354 to 369; it reads PQTNSTKNSSAITSPK. A phosphoserine mark is found at Ser-367, Ser-371, Ser-394, and Ser-397. 2 positions are modified to phosphothreonine: Thr-400 and Thr-401.

This sequence belongs to the protein kinase superfamily. CAMK Ser/Thr protein kinase family. CaMK subfamily. In terms of assembly, CAMK2 is composed of 4 different chains: alpha (CAMK2A), beta (CAMK2B), gamma (CAMK2G), and delta (CAMK2D). The different isoforms assemble into homo- or heteromultimeric holoenzymes composed of 12 subunits with two hexameric rings stacked one on top of the other. Interacts with SYNGAP1, CAMK2N2 and MPDZ. Interacts with FOXO3. Interacts (when in a kinase inactive state not associated with calmodulin) with ARC; leading to target ARC to inactive synapses. Interacts with CAMK2N1; this interaction requires CAMK2B activation by Ca(2+). In terms of processing, autophosphorylation of Thr-287 following activation by Ca(2+)/calmodulin. Phosphorylation of Thr-287 locks the kinase into an activated state.

The protein resides in the cytoplasm. It localises to the cytoskeleton. The protein localises to the microtubule organizing center. Its subcellular location is the centrosome. It is found in the sarcoplasmic reticulum membrane. The protein resides in the synapse. The enzyme catalyses L-seryl-[protein] + ATP = O-phospho-L-seryl-[protein] + ADP + H(+). It carries out the reaction L-threonyl-[protein] + ATP = O-phospho-L-threonyl-[protein] + ADP + H(+). Activated by Ca(2+)/calmodulin. Binding of calmodulin results in conformational change that relieves intrasteric autoinhibition and allows autophosphorylation of Thr-287 which turns the kinase in a constitutively active form and confers to the kinase a Ca(2+)-independent activity. In terms of biological role, calcium/calmodulin-dependent protein kinase that functions autonomously after Ca(2+)/calmodulin-binding and autophosphorylation, and is involved in dendritic spine and synapse formation, neuronal plasticity and regulation of sarcoplasmic reticulum Ca(2+) transport in skeletal muscle. In neurons, plays an essential structural role in the reorganization of the actin cytoskeleton during plasticity by binding and bundling actin filaments in a kinase-independent manner. This structural function is required for correct targeting of CaMK2A, which acts downstream of NMDAR to promote dendritic spine and synapse formation and maintain synaptic plasticity which enables long-term potentiation (LTP) and hippocampus-dependent learning. In developing hippocampal neurons, promotes arborization of the dendritic tree and in mature neurons, promotes dendritic remodeling. Also regulates the migration of developing neurons. Participates in the modulation of skeletal muscle function in response to exercise. In slow-twitch muscles, is involved in regulation of sarcoplasmic reticulum (SR) Ca(2+) transport and in fast-twitch muscle participates in the control of Ca(2+) release from the SR through phosphorylation of triadin, a ryanodine receptor-coupling factor, and phospholamban (PLN/PLB), an endogenous inhibitor of SERCA2A/ATP2A2. In response to interferon-gamma (IFN-gamma) stimulation, catalyzes phosphorylation of STAT1, stimulating the JAK-STAT signaling pathway. Phosphorylates reticulophagy regulator RETREG1 at 'Thr-134' under endoplasmic reticulum stress conditions which enhances RETREG1 oligomerization and its membrane scission and reticulophagy activity. In Mus musculus (Mouse), this protein is Calcium/calmodulin-dependent protein kinase type II subunit beta (Camk2b).